Here is a 93-residue protein sequence, read N- to C-terminus: Small ribosomal subunit protein uS17 (93 aa).

The protein belongs to the universal ribosomal protein uS17 family. As to quaternary structure, part of the 30S ribosomal subunit.

Functionally, one of the primary rRNA binding proteins, it binds specifically to the 5'-end of 16S ribosomal RNA. This chain is Small ribosomal subunit protein uS17, found in Bordetella avium (strain 197N).